The primary structure comprises 180 residues: MKKKTIFQCVILFFSILNIHVGMAGPEQVSMHIYGNVVDQGCDVATKSALQNIHIGDFNISDFQAANTVSTAADLNIDITGCAAGITGADVLFSGEADTLAPTLLKLTDTGGSGGMATGIAVQILDAQSQQEIPLNQVQPLTPLKAGDNTLKYQLRYKSTKAGATGGNATAVLYFDLVYQ.

The first 24 residues, 1 to 24, serve as a signal peptide directing secretion; that stretch reads MKKKTIFQCVILFFSILNIHVGMA.

In terms of biological role, part of the elfADCG-ycbUVF fimbrial operon, which promotes adhesion of bacteria to different abiotic surfaces. This is an uncharacterized protein from Escherichia coli (strain K12).